The following is a 261-amino-acid chain: Glucanase inhibitor protein 3 (261 aa).

An N-terminal signal peptide occupies residues 1 to 21 (MKVLSSLAAALIALSAVDVEA). The region spanning 29–260 (ILGGGKVPVG…GIEWINSVIK (232 aa)) is the Peptidase S1 domain. A disulfide bridge connects residues Cys56 and Cys72. Asn108 is a glycosylation site (N-linked (GlcNAc...) asparagine). Intrachain disulfides connect Cys183-Cys195 and Cys205-Cys236.

It belongs to the peptidase S1 family.

It localises to the secreted. Secreted effector that suppresses host plant glucan elicitor-mediated defense responses. Targets host endoglucanases and inhibits the endoglucanase-mediated release of elicitor-active glucan oligosaccharides from P.sojae cell walls. The chain is Glucanase inhibitor protein 3 (GIP3) from Phytophthora sojae (strain P6497) (Soybean stem and root rot agent).